The sequence spans 310 residues: uncharacterized protein (310 aa).

The segment covering 1-11 (MKVKSILKHSR) has biased composition (basic residues). 2 disordered regions span residues 1 to 227 (MKVK…SDHA) and 242 to 310 (AMEE…NENE). Positions 12-50 (MSSPSLETDSMESGQQQNMVSSTPSIDMNESDCSGTGTP) are enriched in polar residues. The segment covering 51 to 80 (SEERIRRLRWDEENLSKAEQQKSAKMKITE) has biased composition (basic and acidic residues). Residues 91–105 (PDDEVPEINLDETDS) are compositionally biased toward acidic residues. Low complexity predominate over residues 110–121 (TAGTLGDTLGTL). Composition is skewed to basic and acidic residues over residues 126 to 150 (VSKDSKDDNVSFSSDKKQFYVKKEP) and 182 to 195 (LPSKKELFPRETKP). Acidic residues predominate over residues 242–253 (AMEEEALSEAEE). Basic and acidic residues predominate over residues 254–265 (NIPKKKPDFNEL). Phosphoserine is present on S285. The span at 297-310 (DSGSASDVNMNENE) shows a compositional bias: polar residues.

This is an uncharacterized protein from Schizosaccharomyces pombe (strain 972 / ATCC 24843) (Fission yeast).